The chain runs to 632 residues: tRNA uridine 5-carboxymethylaminomethyl modification enzyme MnmG (632 aa).

Residues 13 to 18 (GGGHAG), Val125, and Ser180 contribute to the FAD site. Residue 273–287 (GPRYCPSIEDKVMRF) coordinates NAD(+). FAD is bound at residue Gln370.

The protein belongs to the MnmG family. In terms of assembly, homodimer. Heterotetramer of two MnmE and two MnmG subunits. FAD is required as a cofactor.

It is found in the cytoplasm. In terms of biological role, NAD-binding protein involved in the addition of a carboxymethylaminomethyl (cmnm) group at the wobble position (U34) of certain tRNAs, forming tRNA-cmnm(5)s(2)U34. The sequence is that of tRNA uridine 5-carboxymethylaminomethyl modification enzyme MnmG from Proteus mirabilis (strain HI4320).